Consider the following 186-residue polypeptide: Bilin biosynthesis protein CpeZ (186 aa).

Its function is as follows. Involved in the biosynthesis of bilin. This chain is Bilin biosynthesis protein CpeZ (cpeZ), found in Synechococcus sp. (strain WH8020).